The primary structure comprises 178 residues: Large ribosomal subunit protein uL5 (178 aa).

An N-acetylalanine modification is found at A2. Residue K38 forms a Glycyl lysine isopeptide (Lys-Gly) (interchain with G-Cter in SUMO2) linkage. 2 positions are modified to phosphothreonine: T44 and T47. K52 is subject to N6-acetyllysine; alternate. A Glycyl lysine isopeptide (Lys-Gly) (interchain with G-Cter in SUMO2); alternate cross-link involves residue K52. An N6-acetyllysine modification is found at K85. K154 participates in a covalent cross-link: Glycyl lysine isopeptide (Lys-Gly) (interchain with G-Cter in SUMO2).

It belongs to the universal ribosomal protein uL5 family. Component of the large ribosomal subunit (LSU). Part of the 5S RNP complex, which is a LSU subcomplex composed of the 5S RNA, RPL5 and RPL11. Component of a hexameric 5S RNP precursor complex, composed of 5S RNA, RRS1, RPF2/BXDC1, RPL5, RPL11 and HEATR3; this complex acts as a precursor for ribosome assembly. Interacts with PML. Interacts with MDM2 (via its RanBP2-type zinc finger domain); negatively regulates MDM2-mediated TP53 ubiquitination and degradation. Interacts with NOP53; retains RPL11 into the nucleolus.

It is found in the nucleus. Its subcellular location is the nucleolus. It localises to the cytoplasm. Component of the ribosome, a large ribonucleoprotein complex responsible for the synthesis of proteins in the cell. The small ribosomal subunit (SSU) binds messenger RNAs (mRNAs) and translates the encoded message by selecting cognate aminoacyl-transfer RNA (tRNA) molecules. The large subunit (LSU) contains the ribosomal catalytic site termed the peptidyl transferase center (PTC), which catalyzes the formation of peptide bonds, thereby polymerizing the amino acids delivered by tRNAs into a polypeptide chain. The nascent polypeptides leave the ribosome through a tunnel in the LSU and interact with protein factors that function in enzymatic processing, targeting, and the membrane insertion of nascent chains at the exit of the ribosomal tunnel. As part of the 5S RNP/5S ribonucleoprotein particle it is an essential component of the LSU, required for its formation and the maturation of rRNAs. It also couples ribosome biogenesis to p53/TP53 activation. As part of the 5S RNP it accumulates in the nucleoplasm and inhibits MDM2, when ribosome biogenesis is perturbed, mediating the stabilization and the activation of TP53. Promotes nucleolar location of PML. In Pongo abelii (Sumatran orangutan), this protein is Large ribosomal subunit protein uL5 (RPL11).